The primary structure comprises 367 residues: Porin Omp2a (367 aa).

The signal sequence occupies residues 1-22 (MNIKSLLLGSAAALVAASGAQA).

The protein belongs to the alphaproteobacteria porin family. As to quaternary structure, monomer.

Its subcellular location is the cell outer membrane. In terms of biological role, forms passive diffusion pores that allow small molecular weight hydrophilic materials across the outer membrane. In Brucella melitensis biotype 1 (strain ATCC 23456 / CCUG 17765 / NCTC 10094 / 16M), this protein is Porin Omp2a (omp2a).